Consider the following 507-residue polypeptide: MVYPFELPTTSHLSFQSALSSHTHPSLPQSATTARHALRLALKAHNRLPRGFQRDSHLTSVLSAINDYLPYVVALAQGLNNGKPIDTTTPSTTTHLEEIRVAQRAELEPEWRATLASSSLRRPSTNRTRGTGVQYELAFILTTLGYILSSLARSGVTRTLYASTTPSAEQRTAAVQTATKHLLQASTIHSFLSSSPYFATVSEAATLPDLAPATQAALSSLALAEATLLTVLKDDSYVVACIQARNPNDKDWMVRAPEIPKVRAHLFARLCIRAAEYAEQAATGLSSVAAEGRKAGVDEDVARYAHVLGLVARARACRFFGVDAELAGKVGEGIAWLRAAKGALGLRNTGSASAEEVTTKSRGLSKLKLGFRERREERKLEKGAGGERVDKGGLGPGDNAGREEEGRVLEMLETKWVRANDTLNTQLIPSSADYVANLPSGRDVLPPQPPYTPPSLDEERLFQMRGPPTELELNPGSDDGDSDFESQAAGDAHTPGAFPGRADNAYY.

In terms of domain architecture, BRO1 spans Met1 to Val288. The segment covering Arg375–Lys391 has biased composition (basic and acidic residues). 2 disordered regions span residues Arg375–Glu405 and Pro439–Tyr507.

It belongs to the palC family.

Functionally, required for the proteolytic cleavage of the transcription factor pacC in response to alkaline ambient pH. This chain is pH-response regulator protein palC (palC), found in Emericella nidulans (strain FGSC A4 / ATCC 38163 / CBS 112.46 / NRRL 194 / M139) (Aspergillus nidulans).